We begin with the raw amino-acid sequence, 969 residues long: Chromosome transmission fidelity protein 18 homolog (969 aa).

The disordered stretch occupies residues 30–97 (EGTRDQAPPG…APSSPMVKRP (68 aa)). Thr51 is modified (phosphothreonine). Ser221 carries the phosphoserine modification. Disordered stretches follow at residues 250-269 (SEGEEAVLEGPPAEEPAPGQ) and 318-340 (RKPRPGVETTRVGKEATAPGKWK). Positions 257–268 (LEGPPAEEPAPG) are enriched in low complexity. 369 to 376 (GPPGLGKT) serves as a coordination point for ATP. The disordered stretch occupies residues 856-889 (ARSGPQVDQGSSGPASLWTDSGEKGTRQPAPRNH). Basic and acidic residues predominate over residues 876–889 (SGEKGTRQPAPRNH).

It belongs to the activator 1 small subunits family. CTF18 subfamily. In terms of assembly, component of the CTF18-RFC complex, which consists of CTF18, CTF8, DCC1, RFC2, RFC3, RFC4 and RFC5. During assembly of the CTF18-RFC complex, CTF18 may first assemble into a subcomplex with RFC2, RFC3, RFC4 and RFC5. CTF18 then interacts directly with CTF8, which in turn interacts with DCC1. The CTF18-RFC complex associates with PCNA and with DNA polymerase POLH. The CTF18-RFC complex does not interact with the Rad9/Rad1/Hus1 complex. CTF18 interacts with SMC1A and RAD21. Interacts with DDX11.

The protein localises to the nucleus. Its function is as follows. Chromosome cohesion factor involved in sister chromatid cohesion and fidelity of chromosome transmission. Component of one of the cell nuclear antigen loader complexes, CTF18-replication factor C (CTF18-RFC), which consists of CTF18, CTF8, DCC1, RFC2, RFC3, RFC4 and RFC5. The CTF18-RFC complex binds to single-stranded and primed DNAs and has weak ATPase activity that is stimulated by the presence of primed DNA, replication protein A (RPA) and by proliferating cell nuclear antigen (PCNA). The CTF18-RFC complex catalyzes the ATP-dependent loading of PCNA onto primed and gapped DNA. Interacts with and stimulates DNA polymerase POLH. During DNA repair synthesis, involved in loading DNA polymerase POLE at the sites of local damage. The sequence is that of Chromosome transmission fidelity protein 18 homolog (Chtf18) from Mus musculus (Mouse).